Reading from the N-terminus, the 278-residue chain is Sulfur carrier protein FdhD (278 aa).

The Cysteine persulfide intermediate role is filled by Cys-121. 260–265 (FCKPGR) is a Mo-bis(molybdopterin guanine dinucleotide) binding site.

It belongs to the FdhD family.

It localises to the cytoplasm. Required for formate dehydrogenase (FDH) activity. Acts as a sulfur carrier protein that transfers sulfur from IscS to the molybdenum cofactor prior to its insertion into FDH. The polypeptide is Sulfur carrier protein FdhD (Escherichia coli O127:H6 (strain E2348/69 / EPEC)).